The chain runs to 527 residues: MSDTRTAAMTSKAWPFEEARRVLKRYEKNPPEKGYVLFETGYGPSGLPHIGTFGEVARTSMVMRAFQEISDIPTRLICFSDDLDGMRKVPGNVPNPDALTEHLQRPLTSVPDPFGTHASFGAHNNAMLRRFLDTFGFEYEFISATEFYNTGQFDEILLRAAAKYDEIMAVMLKSLREERRQTYSIFLPIHPESGRVMYVPMKEVNAQAGTITFDSEDGEEMTLPVTGGAVKLQWKPDFGARWAALGVDFEMYGKDHSTNTPIYDKICRILGQRPPEHFTYELFLDENGQKISKSSGNGVSIDEWLTYASTESLSYFMYQKPKTAKRMYFDVIPKAVDEYHQQLRAYAGQDTAQRLNNPVWHIHGGDVPASNMLVPFSMLLNLASVSSAEDKSQLWGFIQRYAPESNPENNPDMDAAADFAVRYFNDFVKPKKVYRAASDLEREALEDLRDQLKAYDGPVDDEALQSIVYACGRERFDPLRGWFTALYEVLLGASQGPRFGGFIALYGVQETVALIDAALAGELLSDD.

Residues 44–52 carry the 'HIGH' region motif; that stretch reads PSGLPHIGT. A 'KMSKS' region motif is present at residues 290–294; sequence KISKS. Lys293 contributes to the ATP binding site.

It belongs to the class-I aminoacyl-tRNA synthetase family.

Its subcellular location is the cytoplasm. It catalyses the reaction tRNA(Lys) + L-lysine + ATP = L-lysyl-tRNA(Lys) + AMP + diphosphate. The sequence is that of Lysine--tRNA ligase from Roseobacter denitrificans (strain ATCC 33942 / OCh 114) (Erythrobacter sp. (strain OCh 114)).